The primary structure comprises 492 residues: Catalase-3 (492 aa).

Residues His-65 and Asn-138 contribute to the active site. A heme-binding site is contributed by Tyr-348.

The protein belongs to the catalase family. As to quaternary structure, homotetramer and heterotetramer. At least six or seven isozymes are produced from a mixture of 3 gene products. Interacts with NCA1. Interacts with LSD1. Requires heme as cofactor.

Its subcellular location is the peroxisome. It catalyses the reaction 2 H2O2 = O2 + 2 H2O. Functionally, occurs in almost all aerobically respiring organisms and serves to protect cells from the toxic effects of hydrogen peroxide. This Arabidopsis thaliana (Mouse-ear cress) protein is Catalase-3 (CAT3).